The chain runs to 572 residues: Proline--tRNA ligase (572 aa).

Belongs to the class-II aminoacyl-tRNA synthetase family. ProS type 1 subfamily. Homodimer.

The protein localises to the cytoplasm. It carries out the reaction tRNA(Pro) + L-proline + ATP = L-prolyl-tRNA(Pro) + AMP + diphosphate. Functionally, catalyzes the attachment of proline to tRNA(Pro) in a two-step reaction: proline is first activated by ATP to form Pro-AMP and then transferred to the acceptor end of tRNA(Pro). As ProRS can inadvertently accommodate and process non-cognate amino acids such as alanine and cysteine, to avoid such errors it has two additional distinct editing activities against alanine. One activity is designated as 'pretransfer' editing and involves the tRNA(Pro)-independent hydrolysis of activated Ala-AMP. The other activity is designated 'posttransfer' editing and involves deacylation of mischarged Ala-tRNA(Pro). The misacylated Cys-tRNA(Pro) is not edited by ProRS. This Hydrogenovibrio crunogenus (strain DSM 25203 / XCL-2) (Thiomicrospira crunogena) protein is Proline--tRNA ligase.